The following is a 265-amino-acid chain: Indole-3-glycerol phosphate synthase (265 aa).

The protein belongs to the TrpC family.

It catalyses the reaction 1-(2-carboxyphenylamino)-1-deoxy-D-ribulose 5-phosphate + H(+) = (1S,2R)-1-C-(indol-3-yl)glycerol 3-phosphate + CO2 + H2O. It functions in the pathway amino-acid biosynthesis; L-tryptophan biosynthesis; L-tryptophan from chorismate: step 4/5. In Xanthomonas euvesicatoria pv. vesicatoria (strain 85-10) (Xanthomonas campestris pv. vesicatoria), this protein is Indole-3-glycerol phosphate synthase.